The following is a 141-amino-acid chain: MPDAVGRELPRDGTVLAFDYGEKKIGVALGNFITREARALTILPNITVEGRFEAVAALIQEWNPVQLIVGMPVNPEGGEQPSMKLARRFGNQLNGRFGLPVEWVDERYTSRAASMAGARRGELDAEAARIILQQYFDQFPL.

This sequence belongs to the YqgF nuclease family.

It is found in the cytoplasm. Could be a nuclease involved in processing of the 5'-end of pre-16S rRNA. The chain is Putative pre-16S rRNA nuclease from Cupriavidus necator (strain ATCC 17699 / DSM 428 / KCTC 22496 / NCIMB 10442 / H16 / Stanier 337) (Ralstonia eutropha).